The following is an 88-amino-acid chain: ATP synthase subunit 9, mitochondrial (88 aa).

2 helical membrane-spanning segments follow: residues 30–50 (IGLT…ILAV) and 66–86 (LGFA…FLIL).

This sequence belongs to the ATPase C chain family. In terms of assembly, F-type ATPases have 2 components, CF(1) - the catalytic core - and CF(0) - the membrane proton channel. CF(1) has five subunits: alpha(3), beta(3), gamma(1), delta(1), epsilon(1). CF(0) has three main subunits: a, b and c.

The protein localises to the mitochondrion membrane. In terms of biological role, mitochondrial membrane ATP synthase (F(1)F(0) ATP synthase or Complex V) produces ATP from ADP in the presence of a proton gradient across the membrane which is generated by electron transport complexes of the respiratory chain. F-type ATPases consist of two structural domains, F(1) - containing the extramembraneous catalytic core and F(0) - containing the membrane proton channel, linked together by a central stalk and a peripheral stalk. During catalysis, ATP synthesis in the catalytic domain of F(1) is coupled via a rotary mechanism of the central stalk subunits to proton translocation. Part of the complex F(0) domain. A homomeric c-ring of probably 10 subunits is part of the complex rotary element. This Dictyostelium citrinum (Slime mold) protein is ATP synthase subunit 9, mitochondrial (atp9).